A 563-amino-acid polypeptide reads, in one-letter code: Putative cysteine ligase BshC (563 aa).

The stretch at 474–506 (LEQSLMGTSKQAEKALDTLRQKTQRANRRKHDE) forms a coiled coil.

This sequence belongs to the BshC family.

This chain is Putative cysteine ligase BshC, found in Prosthecochloris aestuarii (strain DSM 271 / SK 413).